Consider the following 197-residue polypeptide: MAVSKLTLAATSGKSCKILLGLRLLAFSATLSAAIVMGLNKETKTFIVGKVGNTPIQATFTAKFDHTPAFVFFVVANAMVSFHNLLMIALQIFGGKMEFTGFRLLSVAILDMLNVTLISAAANAAAFMAEVGKNGNKHARWDKICDRFATYCDHGAGALIAAFAGVILMLIISAASISRLVQPNKCCSTTASPSVVP.

The residue at position 2 (Ala-2) is an N-acetylalanine. At 2–17 (AVSKLTLAATSGKSCK) the chain is on the cytoplasmic side. Residues 18-38 (ILLGLRLLAFSATLSAAIVMG) traverse the membrane as a helical segment. At 39–69 (LNKETKTFIVGKVGNTPIQATFTAKFDHTPA) the chain is on the extracellular side. The helical transmembrane segment at 70–90 (FVFFVVANAMVSFHNLLMIAL) threads the bilayer. Topologically, residues 91–106 (QIFGGKMEFTGFRLLS) are cytoplasmic. A helical membrane pass occupies residues 107-127 (VAILDMLNVTLISAAANAAAF). The Extracellular segment spans residues 128 to 156 (MAEVGKNGNKHARWDKICDRFATYCDHGA). The chain crosses the membrane as a helical span at residues 157 to 177 (GALIAAFAGVILMLIISAASI). The Cytoplasmic portion of the chain corresponds to 178–197 (SRLVQPNKCCSTTASPSVVP).

This sequence belongs to the Casparian strip membrane proteins (CASP) family. As to quaternary structure, homodimer and heterodimers.

The protein resides in the cell membrane. This chain is CASP-like protein 1B1, found in Arabidopsis thaliana (Mouse-ear cress).